Reading from the N-terminus, the 106-residue chain is YcgL domain-containing protein PsycPRwf_1721 (106 aa).

One can recognise a YcgL domain in the interval 1–94 (MHCDIYKFPK…PSDVLLAQAQ (94 aa)).

This Psychrobacter sp. (strain PRwf-1) protein is YcgL domain-containing protein PsycPRwf_1721.